Consider the following 3232-residue polypeptide: D-lysergyl-peptide-synthetase subunit 1 (3232 aa).

The tract at residues 90-474 (GCLTYDEMSI…LGRKDDQVKI (385 aa)) is adenylation (A) domain 1. The 70-residue stretch at 617-686 (REKLLQGCFA…TLREIVIVST (70 aa)) folds into the Carrier 1 domain. Ser649 is subject to O-(pantetheine 4'-phosphoryl)serine. Positions 731–1122 (EDIYPCTHLQ…EHILTQIHSN (392 aa)) are condensation (C) domain 1. Residues 1165–1572 (QAKCQAQPDA…RRKDAQVKIR (408 aa)) are adenylation (A) domain 2. A Carrier 2 domain is found at 1717-1785 (TEHEISAIWA…TIRKLALARG (69 aa)). Ser1749 carries the O-(pantetheine 4'-phosphoryl)serine modification. Residues 1835–2252 (ERIYPCSPIQ…ALPVLDEDQM (418 aa)) form a condensation (C) domain 2 region. Residues 2276 to 2675 (QQCLRCPDSP…GRNDDQVKVR (400 aa)) are adenylation (A) domain 3. Residues 2810 to 2878 (MEAELQRLVG…RVSDLARIVE (69 aa)) form the Carrier 3 domain. Ser2842 carries the post-translational modification O-(pantetheine 4'-phosphoryl)serine. The tract at residues 2943–3218 (LYFSKPVASE…LLHWLHQQHI (276 aa)) is cyclization (Cyc) domain.

The protein belongs to the NRP synthetase family.

It functions in the pathway alkaloid biosynthesis; ergot alkaloid biosynthesis. D-lysergyl-peptide-synthetase subunit 1; part of the gene cluster that mediates the biosynthesis of fungal ergot alkaloid. DmaW catalyzes the first step of ergot alkaloid biosynthesis by condensing dimethylallyl diphosphate (DMAP) and tryptophan to form 4-dimethylallyl-L-tryptophan. The second step is catalyzed by the methyltransferase easF that methylates 4-dimethylallyl-L-tryptophan in the presence of S-adenosyl-L-methionine, resulting in the formation of 4-dimethylallyl-L-abrine. The catalase easC and the FAD-dependent oxidoreductase easE then transform 4-dimethylallyl-L-abrine to chanoclavine-I which is further oxidized by easD in the presence of NAD(+), resulting in the formation of chanoclavine-I aldehyde. Agroclavine dehydrogenase easG then mediates the conversion of chanoclavine-I aldehyde to agroclavine via a non-enzymatic adduct reaction: the substrate is an iminium intermediate that is formed spontaneously from chanoclavine-I aldehyde in the presence of glutathione. The presence of easA is not required to complete this reaction. Further conversion of agroclavine to paspalic acid is a two-step process involving oxidation of agroclavine to elymoclavine and of elymoclavine to paspalic acid, the second step being performed by the elymoclavine oxidase cloA. Paspalic acid is then further converted to D-lysergic acid. Ergopeptines are assembled from D-lysergic acid and three different amino acids by the D-lysergyl-peptide-synthetases composed each of a monomudular and a trimodular nonribosomal peptide synthetase subunit. LpsB and lpsC encode the monomodular subunits responsible for D-lysergic acid activation and incorporation into the ergopeptine backbone. LpsA1 and A2 subunits encode the trimodular nonribosomal peptide synthetase assembling the tripeptide portion of ergopeptines. LpsA1 is responsible for formation of the major ergopeptine, ergotamine, and lpsA2 for alpha-ergocryptine, the minor ergopeptine of the total alkaloid mixture elaborated by C.purpurea. D-lysergyl-tripeptides are assembled by the nonribosomal peptide synthetases and released as N-(D-lysergyl-aminoacyl)-lactams. Cyclolization of the D-lysergyl-tripeptides is performed by the Fe(2+)/2-ketoglutarate-dependent dioxygenase easH which introduces a hydroxyl group into N-(D-lysergyl-aminoacyl)-lactam at alpha-C of the aminoacyl residue followed by spontaneous condensation with the terminal lactam carbonyl group. This chain is D-lysergyl-peptide-synthetase subunit 1, found in Claviceps purpurea (Ergot fungus).